Consider the following 276-residue polypeptide: Large ribosomal subunit protein uL2 (276 aa).

Residues 224–276 (VAMNPVDHPHGGGEGKTGEGRVPVSPWGTPTKGYRTRRNKRTTSMIVQRRQKR) form a disordered region. The segment covering 230 to 242 (DHPHGGGEGKTGE) has biased composition (basic and acidic residues).

Belongs to the universal ribosomal protein uL2 family. As to quaternary structure, part of the 50S ribosomal subunit. Forms a bridge to the 30S subunit in the 70S ribosome.

In terms of biological role, one of the primary rRNA binding proteins. Required for association of the 30S and 50S subunits to form the 70S ribosome, for tRNA binding and peptide bond formation. It has been suggested to have peptidyltransferase activity; this is somewhat controversial. Makes several contacts with the 16S rRNA in the 70S ribosome. In Polynucleobacter asymbioticus (strain DSM 18221 / CIP 109841 / QLW-P1DMWA-1) (Polynucleobacter necessarius subsp. asymbioticus), this protein is Large ribosomal subunit protein uL2.